The following is a 471-amino-acid chain: Serine hydroxymethyltransferase, cytosolic (471 aa).

N6-(pyridoxal phosphate)lysine is present on lysine 249.

It belongs to the SHMT family. Requires pyridoxal 5'-phosphate as cofactor.

The protein resides in the cytoplasm. The protein localises to the cytosol. It catalyses the reaction (6R)-5,10-methylene-5,6,7,8-tetrahydrofolate + glycine + H2O = (6S)-5,6,7,8-tetrahydrofolate + L-serine. Its pathway is one-carbon metabolism; tetrahydrofolate interconversion. In terms of biological role, catalyzes the interconversion of serine and glycine. Essential for viability and required for virulence in a murine model of established pulmonary infection. The polypeptide is Serine hydroxymethyltransferase, cytosolic (Aspergillus fumigatus (strain ATCC MYA-4609 / CBS 101355 / FGSC A1100 / Af293) (Neosartorya fumigata)).